Here is a 147-residue protein sequence, read N- to C-terminus: Hemoglobin subunit beta (147 aa).

Val-2 is subject to N-acetylvaline. The 145-residue stretch at 3–147 (HLTGEEKSAV…VANALAHKYH (145 aa)) folds into the Globin domain. Thr-13 carries the post-translational modification Phosphothreonine. The residue at position 45 (Ser-45) is a Phosphoserine. At Lys-60 the chain carries N6-acetyllysine. His-64 contacts heme b. An N6-acetyllysine modification is found at Lys-83. Residue His-93 coordinates heme b. Cys-94 bears the S-nitrosocysteine mark. Lys-145 is subject to N6-acetyllysine.

This sequence belongs to the globin family. As to quaternary structure, heterotetramer of two alpha chains and two beta chains. In terms of tissue distribution, red blood cells.

Involved in oxygen transport from the lung to the various peripheral tissues. The chain is Hemoglobin subunit beta (HBB) from Ateles paniscus (Black spider monkey).